The sequence spans 961 residues: Phosphofurin acidic cluster sorting protein 1 (961 aa).

The span at 1 to 19 (MAERGGAGGGPGGAGGGSS) shows a compositional bias: gly residues. Disordered regions lie at residues 1–70 (MAER…SSST) and 76–95 (VAVA…RTPA). Residue A2 is modified to N-acetylalanine. The segment covering 20 to 30 (QRGSGVAQSPQ) has biased composition (low complexity). At S28 the chain carries Phosphoserine. The segment covering 31 to 46 (QQPPQQPSQPQQPTPP) has biased composition (pro residues). T44 is modified (phosphothreonine). The segment covering 51-70 (ATSSSSSTSAAAASSSSSST) has biased composition (low complexity). Y249 is modified (phosphotyrosine). Basic and acidic residues predominate over residues 260–271 (GIKSKLSDRSPD). Disordered regions lie at residues 260–297 (GIKS…LHGQ) and 375–426 (NPSD…GKDT). A compositionally biased stretch (acidic residues) spans 274 to 291 (NYSEEEEESFSSEQEGSD). A coiled-coil region spans residues 351–375 (HVSREQIREVEEDLDELYDSLEMYN). Phosphoserine is present on residues S377 and S379. The span at 404-426 (MSQSSSQTEIGSLNSKGSLGKDT) shows a compositional bias: polar residues. S428 and S493 each carry phosphoserine. 2 disordered regions span residues 475-540 (EKVK…HSTQ) and 758-802 (SPST…SMSS). Residue T502 is modified to Phosphothreonine. 5 positions are modified to phosphoserine: S517, S526, S527, S529, and S532. A compositionally biased stretch (low complexity) spans 768–802 (SPVVSLTVPSTSPPSSSGLSRDATATPPSSPSMSS).

The protein belongs to the PACS family. Associates with AP-1 and AP-3 but not with AP-2 complexes. Interacts with FURIN. Forms a ternary complex with furin and AP-1. Interacts with PKD2 (via acidic region). Interacts with SORL1. Interacts with WDR37.

It localises to the golgi apparatus. The protein resides in the trans-Golgi network. Its function is as follows. Coat protein that is involved in the localization of trans-Golgi network (TGN) membrane proteins that contain acidic cluster sorting motifs. Controls the endosome-to-Golgi trafficking of furin and mannose-6-phosphate receptor by connecting the acidic-cluster-containing cytoplasmic domain of these molecules with the adapter-protein complex-1 (AP-1) of endosomal clathrin-coated membrane pits. Required for normal ER Ca2+ handling in lymphocytes. Together with WDR37, it plays an essential role in lymphocyte development, quiescence and survival. Required for stabilizing peripheral lymphocyte populations. The chain is Phosphofurin acidic cluster sorting protein 1 (Pacs1) from Rattus norvegicus (Rat).